Consider the following 354-residue polypeptide: Ornithine transcarbamylase, mitochondrial (354 aa).

Residues M1 to Q32 constitute a mitochondrion transit peptide. An N6-acetyllysine; alternate modification is found at K70. Position 70 is an N6-succinyllysine; alternate (K70). Position 80 is an N6-succinyllysine (K80). K88 carries the post-translational modification N6-acetyllysine; alternate. K88 bears the N6-succinyllysine; alternate mark. S90–R94 is a binding site for carbamoyl phosphate. S133 is modified (phosphoserine). R141 contacts carbamoyl phosphate. An L-ornithine-binding site is contributed by R141. Residue K144 is modified to N6-acetyllysine; alternate. K144 carries the post-translational modification N6-succinyllysine; alternate. H168 serves as a coordination point for carbamoyl phosphate. N199 lines the L-ornithine pocket. Residues K221, K231, and K238 each carry the N6-acetyllysine; alternate modification. N6-succinyllysine; alternate occurs at positions 221, 231, and 238. K243 is subject to N6-acetyllysine. Residue D263–S267 participates in L-ornithine binding. N6-succinyllysine occurs at positions 274 and 289. K292 is subject to N6-acetyllysine; alternate. K292 is subject to N6-succinyllysine; alternate. Residue H302–P305 participates in L-ornithine binding. The active site involves C303. Position 307 is an N6-acetyllysine; alternate (K307). K307 bears the N6-succinyllysine; alternate mark. R330 provides a ligand contact to carbamoyl phosphate. Residue R330 participates in L-ornithine binding.

Belongs to the aspartate/ornithine carbamoyltransferase superfamily. OTCase family. In terms of assembly, homotrimer. In terms of processing, acetylation at Lys-88 negatively regulates ornithine carbamoyltransferase activity in response to nutrient signals.

Its subcellular location is the mitochondrion matrix. The enzyme catalyses carbamoyl phosphate + L-ornithine = L-citrulline + phosphate + H(+). It functions in the pathway nitrogen metabolism; urea cycle; L-citrulline from L-ornithine and carbamoyl phosphate: step 1/1. With respect to regulation, negatively regulated by lysine acetylation. Catalyzes the second step of the urea cycle, the condensation of carbamoyl phosphate with L-ornithine to form L-citrulline. The urea cycle ensures the detoxification of ammonia by converting it to urea for excretion. The sequence is that of Ornithine transcarbamylase, mitochondrial from Mus musculus (Mouse).